The sequence spans 309 residues: MQTKPFRIGTRGSPLALAQAYETRSRLMAAHGLPEEMFEIVVLSTKGDRITDRALSEIGGKGLFTEELENQLLSGELDIAVHSSKDMPTVLPEGLHLSAFLPREDMRDAFIGRTAPKLLELPQGAVVGSASLRRQALIRRLRPDLNVIVFRGLVDTRLRKLEEGQADATLLAFAGLKRLGKDNVPTEILDPKEFPPAPAQGAIGVESRIGDARMDKLLAPINDRPTYDAVTCERAFLAALDGSCRTPIAGYATCEGDNLHFSGLILTPDGQTSHGVEISGNRRDALILGKKAGEEVRAKAGSNFFEGWS.

Residue cysteine 244 is modified to S-(dipyrrolylmethanemethyl)cysteine.

Belongs to the HMBS family. Monomer. Dipyrromethane is required as a cofactor.

It catalyses the reaction 4 porphobilinogen + H2O = hydroxymethylbilane + 4 NH4(+). Its pathway is porphyrin-containing compound metabolism; protoporphyrin-IX biosynthesis; coproporphyrinogen-III from 5-aminolevulinate: step 2/4. Tetrapolymerization of the monopyrrole PBG into the hydroxymethylbilane pre-uroporphyrinogen in several discrete steps. The sequence is that of Porphobilinogen deaminase from Agrobacterium fabrum (strain C58 / ATCC 33970) (Agrobacterium tumefaciens (strain C58)).